Here is a 64-residue protein sequence, read N- to C-terminus: Lectin-A (64 aa).

Chitin-binding type-1 domains lie at Ala-1–Thr-20 and Asp-22–Ala-45.

Glycosylated.

Functionally, N-acetyl-D-glucosamine binding lectin. Shows low hemagglutinating activity towards human erythrocytes. Has low mitogenic activity towards human peripheral blood lymphocytes. The polypeptide is Lectin-A (Phytolacca americana (American pokeweed)).